The following is a 313-amino-acid chain: Porphobilinogen deaminase (313 aa).

Cysteine 242 carries the S-(dipyrrolylmethanemethyl)cysteine modification.

This sequence belongs to the HMBS family. As to quaternary structure, monomer. Requires dipyrromethane as cofactor.

The enzyme catalyses 4 porphobilinogen + H2O = hydroxymethylbilane + 4 NH4(+). Its pathway is porphyrin-containing compound metabolism; protoporphyrin-IX biosynthesis; coproporphyrinogen-III from 5-aminolevulinate: step 2/4. Tetrapolymerization of the monopyrrole PBG into the hydroxymethylbilane pre-uroporphyrinogen in several discrete steps. This Pseudomonas syringae pv. tomato (strain ATCC BAA-871 / DC3000) protein is Porphobilinogen deaminase.